The sequence spans 409 residues: Elongation factor Tu, chloroplastic (409 aa).

The region spanning 10-214 is the tr-type G domain; it reads KPHVNIGTIG…TVDAYIPTPE (205 aa). Positions 19–26 are G1; the sequence is GHVDHGKT. 19 to 26 provides a ligand contact to GTP; sequence GHVDHGKT. Thr-26 contributes to the Mg(2+) binding site. A G2 region spans residues 60-64; the sequence is GITIN. The interval 81 to 84 is G3; the sequence is DCPG. Residues 81–85 and 136–139 contribute to the GTP site; these read DCPGH and NKED. Residues 136-139 are G4; sequence NKED. The G5 stretch occupies residues 174–176; the sequence is SAL.

It belongs to the TRAFAC class translation factor GTPase superfamily. Classic translation factor GTPase family. EF-Tu/EF-1A subfamily.

It localises to the plastid. The protein resides in the chloroplast. It catalyses the reaction GTP + H2O = GDP + phosphate + H(+). Functionally, GTP hydrolase that promotes the GTP-dependent binding of aminoacyl-tRNA to the A-site of ribosomes during protein biosynthesis. The protein is Elongation factor Tu, chloroplastic (tufA) of Pleurastrum terricola (Filamentous green alga).